Reading from the N-terminus, the 549-residue chain is Dihydroxy-acid dehydratase (549 aa).

D78 serves as a coordination point for Mg(2+). C119 is a [2Fe-2S] cluster binding site. D120 and K121 together coordinate Mg(2+). K121 carries the post-translational modification N6-carboxylysine. C191 contributes to the [2Fe-2S] cluster binding site. Position 441 (E441) interacts with Mg(2+). S466 acts as the Proton acceptor in catalysis.

This sequence belongs to the IlvD/Edd family. Homodimer. [2Fe-2S] cluster serves as cofactor. Mg(2+) is required as a cofactor.

The enzyme catalyses (2R)-2,3-dihydroxy-3-methylbutanoate = 3-methyl-2-oxobutanoate + H2O. The catalysed reaction is (2R,3R)-2,3-dihydroxy-3-methylpentanoate = (S)-3-methyl-2-oxopentanoate + H2O. Its pathway is amino-acid biosynthesis; L-isoleucine biosynthesis; L-isoleucine from 2-oxobutanoate: step 3/4. The protein operates within amino-acid biosynthesis; L-valine biosynthesis; L-valine from pyruvate: step 3/4. Its function is as follows. Functions in the biosynthesis of branched-chain amino acids. Catalyzes the dehydration of (2R,3R)-2,3-dihydroxy-3-methylpentanoate (2,3-dihydroxy-3-methylvalerate) into 2-oxo-3-methylpentanoate (2-oxo-3-methylvalerate) and of (2R)-2,3-dihydroxy-3-methylbutanoate (2,3-dihydroxyisovalerate) into 2-oxo-3-methylbutanoate (2-oxoisovalerate), the penultimate precursor to L-isoleucine and L-valine, respectively. This is Dihydroxy-acid dehydratase from Methanobrevibacter smithii (strain ATCC 35061 / DSM 861 / OCM 144 / PS).